Here is a 41-residue protein sequence, read N- to C-terminus: Pi-stichotoxin-Hcr5a (41 aa).

3 disulfide bridges follow: Cys-4/Cys-37, Cys-6/Cys-30, and Cys-20/Cys-38.

The protein belongs to the sea anemone type 3 (BDS) potassium channel toxin family.

The protein localises to the secreted. Its subcellular location is the nematocyst. Functionally, weakly inhibits human homomeric ASIC3 (IC(50)=5.5 uM). This is Pi-stichotoxin-Hcr5a from Radianthus crispa (Leathery sea anemone).